The chain runs to 994 residues: Alanine--tRNA ligase, chloroplastic/mitochondrial (994 aa).

The segment at methionine 1 to serine 29 is disordered. 4 residues coordinate Zn(2+): histidine 672, histidine 676, cysteine 774, and histidine 778.

The protein belongs to the class-II aminoacyl-tRNA synthetase family. As to quaternary structure, monomer. Zn(2+) is required as a cofactor.

Its subcellular location is the plastid. The protein localises to the chloroplast. The protein resides in the mitochondrion. It catalyses the reaction tRNA(Ala) + L-alanine + ATP = L-alanyl-tRNA(Ala) + AMP + diphosphate. Functionally, catalyzes the attachment of alanine to tRNA(Ala) in a two-step reaction: alanine is first activated by ATP to form Ala-AMP and then transferred to the acceptor end of tRNA(Ala). Also edits incorrectly charged tRNA(Ala) via its editing domain. The sequence is that of Alanine--tRNA ligase, chloroplastic/mitochondrial from Populus trichocarpa (Western balsam poplar).